Here is a 724-residue protein sequence, read N- to C-terminus: Probable ATP-dependent RNA helicase DDX4 (724 aa).

The span at 1-11 shows a compositional bias: acidic residues; the sequence is MSGQEDWESEI. Disordered stretches follow at residues 1–25 and 37–241; these read MSGQ…SNSE and SSNN…QGPR. Positions 108–130 are enriched in basic and acidic residues; it reads SNGKQESGDFTNDDNRTIDDNRR. A compositionally biased stretch (polar residues) spans 168 to 182; the sequence is EQSGFTSNDGFNNET. The Q motif signature appears at 286–314; sequence LTFEEANLCDSLAKNVCKSGYVKLTPIQK. The Helicase ATP-binding domain occupies 317 to 500; sequence IPIIVAGRDL…REILKPDYLF (184 aa). 330 to 337 provides a ligand contact to ATP; it reads AQTGSGKT. The DEAD box signature appears at 444–447; it reads DEAD. Positions 512-675 constitute a Helicase C-terminal domain; it reads DVEQMVIEVD…EVPAWLEEVA (164 aa). The span at 683 to 692 shows a compositional bias: polar residues; that stretch reads AYNPRSNKFA. Positions 683-724 are disordered; it reads AYNPRSNKFASTDDRKRGDSRGDYSTSGFSPSAAQAEEEDWG. Over residues 693 to 704 the composition is skewed to basic and acidic residues; the sequence is STDDRKRGDSRG. Over residues 705–715 the composition is skewed to polar residues; it reads DYSTSGFSPSA.

This sequence belongs to the DEAD box helicase family. DDX4/VASA subfamily.

The protein resides in the cytoplasm. The enzyme catalyses ATP + H2O = ADP + phosphate + H(+). Its function is as follows. Probable ATP-dependent RNA helicase required during spermatogenesis to repress transposable elements and preventing their mobilization, which is essential for the germline integrity. Acts via the piRNA metabolic process, which mediates the repression of transposable elements during meiosis by forming complexes composed of piRNAs and Piwi proteins and governs the methylation and subsequent repression of transposons. Involved in the secondary piRNAs metabolic process, the production of piRNAs in fetal male germ cells through a ping-pong amplification cycle. This is Probable ATP-dependent RNA helicase DDX4 from Pelophylax lessonae (Pool frog).